The sequence spans 502 residues: ATP synthase subunit alpha (502 aa).

Residue 169–176 (GDRQTGKT) coordinates ATP.

It belongs to the ATPase alpha/beta chains family. As to quaternary structure, F-type ATPases have 2 components, CF(1) - the catalytic core - and CF(0) - the membrane proton channel. CF(1) has five subunits: alpha(3), beta(3), gamma(1), delta(1), epsilon(1). CF(0) has three main subunits: a(1), b(2) and c(9-12). The alpha and beta chains form an alternating ring which encloses part of the gamma chain. CF(1) is attached to CF(0) by a central stalk formed by the gamma and epsilon chains, while a peripheral stalk is formed by the delta and b chains.

Its subcellular location is the cell membrane. The catalysed reaction is ATP + H2O + 4 H(+)(in) = ADP + phosphate + 5 H(+)(out). Functionally, produces ATP from ADP in the presence of a proton gradient across the membrane. The alpha chain is a regulatory subunit. The polypeptide is ATP synthase subunit alpha (Desulfitobacterium hafniense (strain DSM 10664 / DCB-2)).